The following is a 764-amino-acid chain: MVEERGSSRSSRGGSWGSGEDGGSSHGGKGVPKLSRTVAKKIHKYDVSADHSDYEDDGSVHSTSSSGSRRNPLSKSIIQQQSFRVGANFEEDLKTLYELIGVSKPADLAISASDWQSRGKSIAYSQPLSSPSLSQEHGEASHSNDLKPSIIDFRSEAPAASPRELPVAPVKLDAHERMTYRSDYVNSQPQNHYGRKNSPSQRSPPPESFPAFDSSPSRLGREGYGLHRMQSDPVMPTLGALSPLGTGNAHPESAGSTATRRWSFDLVPGNHEGDYANMSQVVRDNLPSAAVAMPKNGLVRRSPIIRDPNRSNSSVSNPYAQRQYPNLAEEAESSAKPESSAIPDSSAMPELPAKLESTAVPELSAKPESNAKPESEPEQDSSVEARTEHYGSVRKSKIPSALIIDKFEEPSIVSTGRSPGVVSKRPPWDTWFKGDFIGSGTFGSVYEGIDNNGMFFAVKEVSLKDQGKVGQEAIKQLEHEIALLSDIQHPNIVQYLGTERDDEKLYIFLELVSKGSLASLYKKYYFVYDQVRAYTKQILSGLKYLHDRKIIHRDIKCANILVDTNGVVKLADFGMAKQVDKLGLLKSFMGSAHWMAPEVVNPKRQYNFLADIWSLGCTVLEMATGDAPFGELECHSVLWKVGNGEGPLIPDDLEDEMKDFISKCLEVTVGNRPTCDMLLTHPFITGEPMTGPVKLVPMPELSTISEERSIDVSESPSIATSSQSGSSPSVAGDAVSPASVAVRPRSMRTLRSEFSMSSPESIAS.

Disordered stretches follow at residues 1–81 (MVEE…IQQQ), 120–260 (KSIA…TATR), 325–348 (PNLA…SSAM), and 360–392 (VPEL…HYGS). The span at 14–30 (GSWGSGEDGGSSHGGKG) shows a compositional bias: gly residues. Low complexity-rich tracts occupy residues 60 to 76 (VHST…LSKS) and 125 to 135 (SQPLSSPSLSQ). Positions 136–145 (EHGEASHSND) are enriched in basic and acidic residues. Residues 184-201 (YVNSQPQNHYGRKNSPSQ) show a composition bias toward polar residues. Residues 431 to 684 (WFKGDFIGSG…CDMLLTHPFI (254 aa)) enclose the Protein kinase domain. ATP-binding positions include 437 to 445 (IGSGTFGSV) and K459. D554 (proton acceptor) is an active-site residue. Residues 706–764 (EERSIDVSESPSIATSSQSGSSPSVAGDAVSPASVAVRPRSMRTLRSEFSMSSPESIAS) form a disordered region. Positions 715–729 (SPSIATSSQSGSSPS) are enriched in low complexity. The segment covering 752 to 764 (SEFSMSSPESIAS) has biased composition (polar residues).

It belongs to the protein kinase superfamily. STE Ser/Thr protein kinase family. MAP kinase kinase kinase subfamily.

The protein localises to the cell membrane. It catalyses the reaction L-seryl-[protein] + ATP = O-phospho-L-seryl-[protein] + ADP + H(+). The enzyme catalyses L-threonyl-[protein] + ATP = O-phospho-L-threonyl-[protein] + ADP + H(+). The CERK1, MEKK1a/b, MKK1a/b/c and MPK4a/b proteins are involved in pathogen defense. The pathway induces rapid growth inhibition, cell wall depositions and accumulation of defense-related transcripts. This protein is required for responses to chitin and acts redundantly with MEKK1a. This is Mitogen-activated protein kinase kinase kinase 1b (MEKK1b) from Physcomitrium patens (Spreading-leaved earth moss).